We begin with the raw amino-acid sequence, 84 residues long: Large ribosomal subunit protein bL27 (84 aa).

The disordered stretch occupies residues 1–22; it reads MAHKKAGGSTRNGRDSESKRLG.

This sequence belongs to the bacterial ribosomal protein bL27 family.

The polypeptide is Large ribosomal subunit protein bL27 (Shewanella sp. (strain MR-4)).